The sequence spans 162 residues: Xanthine phosphoribosyltransferase (162 aa).

Positions 5 and 12 each coordinate xanthine. 113 to 117 (ANGQA) is a binding site for 5-phospho-alpha-D-ribose 1-diphosphate. Lys-141 is a binding site for xanthine.

The protein belongs to the purine/pyrimidine phosphoribosyltransferase family. Xpt subfamily. In terms of assembly, homodimer.

Its subcellular location is the cytoplasm. The enzyme catalyses XMP + diphosphate = xanthine + 5-phospho-alpha-D-ribose 1-diphosphate. Its pathway is purine metabolism; XMP biosynthesis via salvage pathway; XMP from xanthine: step 1/1. Functionally, converts the preformed base xanthine, a product of nucleic acid breakdown, to xanthosine 5'-monophosphate (XMP), so it can be reused for RNA or DNA synthesis. The chain is Xanthine phosphoribosyltransferase (xpt) from Streptococcus mitis.